The chain runs to 371 residues: MKIDSWLNDRLDIAKEAGVHRNLRSMNGAPVPERNIDGENQTVWSSNNYLGLASDRRLIDAAQTALQQFGTGSSGSRLTTGNSVWHEKLEKKIASFKRTEAALLFSSGYLANVGVLSSLPEKEDVILSDQLNHASIIDGCRLSKADTVVYRHIDMNDLENKLNETQRYQRRFIVTDGVFSMDGTIVPLDQIISLAKRYHAFVVVDDAHATGVLGDSGRGTSEYFGVYPDIVIGTLSKAVGTEGGFAAGSAVFIDFLLNHARTFIFQTAIPPASCAAAHEAFNIRTSLKNMGYVVKGDHTPIIPVVIGDAHKTVIFAEKLQGKGIYAPAIRPPTVAPGESRIRITITSDHSMGDIDDLLKTFHSIGKELHII.

R21 provides a ligand contact to substrate. 108-109 serves as a coordination point for pyridoxal 5'-phosphate; the sequence is GY. A substrate-binding site is contributed by H133. Residues S180, 205–208, and 234–237 each bind pyridoxal 5'-phosphate; these read DDAH and TLSK. K237 is modified (N6-(pyridoxal phosphate)lysine). Position 333 (T333) interacts with substrate.

It belongs to the class-II pyridoxal-phosphate-dependent aminotransferase family. BioF subfamily. Homodimer. The cofactor is pyridoxal 5'-phosphate.

It catalyses the reaction 6-carboxyhexanoyl-[ACP] + L-alanine + H(+) = (8S)-8-amino-7-oxononanoate + holo-[ACP] + CO2. It participates in cofactor biosynthesis; biotin biosynthesis. Its function is as follows. Catalyzes the decarboxylative condensation of pimeloyl-[acyl-carrier protein] and L-alanine to produce 8-amino-7-oxononanoate (AON), [acyl-carrier protein], and carbon dioxide. This chain is Putative 8-amino-7-oxononanoate synthase (bioF), found in Bacillus subtilis subsp. natto.